Consider the following 1456-residue polypeptide: MRLPLLLVFASVIPGAVLLLDTRQFLIYNEDHKRCVDAVSPSAVQTAACNQDAESQKFRWVSESQIMSVAFKLCLGVPSKTDWVAITLYACDSKSEFQKWECKNDTLLGIKGEDLFFNYGNRQEKNIMLYKGSGLWSRWKIYGTTDNLCSRGYEAMYTLLGNANGATCAFPFKFENKWYADCTSAGRSDGWLWCGTTTDYDTDKLFGYCPLKFEGSESLWNKDPLTSVSYQINSKSALTWHQARKSCQQQNAELLSITEIHEQTYLTGLTSSLTSGLWIGLNSLSFNSGWQWSDRSPFRYLNWLPGSPSAEPGKSCVSLNPGKNAKWENLECVQKLGYICKKGNTTLNSFVIPSESDVPTHCPSQWWPYAGHCYKIHRDEKKIQRDALTTCRKEGGDLTSIHTIEELDFIISQLGYEPNDELWIGLNDIKIQMYFEWSDGTPVTFTKWLRGEPSHENNRQEDCVVMKGKDGYWADRGCEWPLGYICKMKSRSQGPEIVEVEKGCRKGWKKHHFYCYMIGHTLSTFAEANQTCNNENAYLTTIEDRYEQAFLTSFVGLRPEKYFWTGLSDIQTKGTFQWTIEEEVRFTHWNSDMPGRKPGCVAMRTGIAGGLWDVLKCDEKAKFVCKHWAEGVTHPPKPTTTPEPKCPEDWGASSRTSLCFKLYAKGKHEKKTWFESRDFCRALGGDLASINNKEEQQTIWRLITASGSYHKLFWLGLTYGSPSEGFTWSDGSPVSYENWAYGEPNNYQNVEYCGELKGDPTMSWNDINCEHLNNWICQIQKGQTPKPEPTPAPQDNPPVTEDGWVIYKDYQYYFSKEKETMDNARAFCKRNFGDLVSIQSESEKKFLWKYVNRNDAQSAYFIGLLISLDKKFAWMDGSKVDYVSWATGEPNFANEDENCVTMYSNSGFWNDINCGYPNAFICQRHNSSINATTVMPTMPSVPSGCKEGWNFYSNKCFKIFGFMEEERKNWQEARKACIGFGGNLVSIQNEKEQAFLTYHMKDSTFSAWTGLNDVNSEHTFLWTDGRGVHYTNWGKGYPGGRRSSLSYEDADCVVIIGGASNEAGKWMDDTCDSKRGYICQTRSDPSLTNPPATIQTDGFVKYGKSSYSLMRQKFQWHEAETYCKLHNSLIASILDPYSNAFAWLQMETSNERVWIALNSNLTDNQYTWTDKWRVRYTNWAADEPKLKSACVYLDLDGYWKTAHCNESFYFLCKRSDEIPATEPPQLPGRCPESDHTAWIPFHGHCYYIESSYTRNWGQASLECLRMGSSLVSIESAAESSFLSYRVEPLKSKTNFWIGLFRNVEGTWLWINNSPVSFVNWNTGDPSGERNDCVALHASSGFWSNIHCSSYKGYICKRPKIIDAKPTHELLTTKADTRKMDPSKPSSNVAGVVIIVILLILTGAGLAAYFFYKKRRVHLPQEGAFENTLYFNSQSSPGTSDMKDLVGNIEQNEHSVI.

A signal peptide spans 1–18; that stretch reads MRLPLLLVFASVIPGAVL. Topologically, residues 19-1389 are extracellular; that stretch reads LLDTRQFLIY…DPSKPSSNVA (1371 aa). Residues 22–142 form the Ricin B-type lectin domain; it reads TRQFLIYNED…SGLWSRWKIY (121 aa). Intrachain disulfides connect C35–C49 and C74–C91. Residue N104 is glycosylated (N-linked (GlcNAc...) asparagine). Residues 163-211 form the Fibronectin type-II domain; sequence ANGATCAFPFKFENKWYADCTSAGRSDGWLWCGTTTDYDTDKLFGYCPL. Disulfide bonds link C168–C194, C182–C209, C247–C340, and C316–C332. Residues 225-341 enclose the C-type lectin 1 domain; it reads LTSVSYQINS…CVQKLGYICK (117 aa). Residue N344 is glycosylated (N-linked (GlcNAc...) asparagine). C-type lectin domains are found at residues 369-487, 511-626, 655-778, and 807-923; these read YAGH…YICK, HHFY…FVCK, RTSL…WICQ, and YKDY…FICQ. 2 disulfides stabilise this stretch: C391–C486 and C463–C478. A glycan (N-linked (GlcNAc...) asparagine) is linked at N529. Disulfide bonds link C532-C625, C600-C617, C646-C659, C680-C777, C753-C769, C828-C922, and C899-C914. N926 and N930 each carry an N-linked (GlcNAc...) asparagine glycan. 3 consecutive C-type lectin domains span residues 952–1080, 1102–1213, and 1241–1356; these read YSNK…YICQ, YGKS…FLCK, and FHGH…YICK. Intrachain disulfides connect C977-C1079, C1052-C1071, C1123-C1212, C1190-C1204, C1263-C1355, and C1332-C1347. N1160 carries an N-linked (GlcNAc...) asparagine glycan. N-linked (GlcNAc...) asparagine glycosylation occurs at N1205. Residues 1390–1410 traverse the membrane as a helical segment; that stretch reads GVVIIVILLILTGAGLAAYFF. At 1411-1456 the chain is on the cytoplasmic side; sequence YKKRRVHLPQEGAFENTLYFNSQSSPGTSDMKDLVGNIEQNEHSVI.

In terms of assembly, (Microbial infection) Interacts with Dengue virus. (Microbial infection) May act as a receptor for hepatitis B virus, enabling uptake of the virus in hepatic dendritic cells.

It localises to the endosome membrane. The protein localises to the cell membrane. Its function is as follows. Mediates the endocytosis of glycoproteins by macrophages. Binds both sulfated and non-sulfated polysaccharide chains. Functionally, (Microbial infection) Acts as a phagocytic receptor for bacteria, fungi and other pathogens. In terms of biological role, (Microbial infection) Acts as a receptor for Dengue virus envelope protein E. (Microbial infection) Interacts with Hepatitis B virus envelope protein. The polypeptide is Macrophage mannose receptor 1 (MRC1) (Homo sapiens (Human)).